The sequence spans 361 residues: MTVSTAQMRFWSPEVRELEPYVPGEQPKIQNLLKLNTNENPYPPSPKVVEAVQAVLHEQADVLRLYPDPDATALKQAIAKQQNIDVSQVFVGNGSDEVLAHIFKAFFLQDEPILYPDITYSFYPVYSQFFGTKTKEIPLNENFEIDVRDYTQPNGGVIITNPNAPTSIALSLAEIEQVLQANPDRVVVIDEAYVDFGAESAVSLINRYENLVVCQTTSKSRSLAGLRVGFAIAQSHLIAALETVKNSFNSYPIDRFAIAAAVASFEDQVYFEEQCQKVITSREKLVRDLTVLGFNVLPSKANFIFATHSQHDAGQLAQKLREQGIIVRYFNKPRINQFLRITVGTDEQNARLVQTLKQDIL.

At Lys-219 the chain carries N6-(pyridoxal phosphate)lysine.

Belongs to the class-II pyridoxal-phosphate-dependent aminotransferase family. Histidinol-phosphate aminotransferase subfamily. As to quaternary structure, homodimer. Pyridoxal 5'-phosphate serves as cofactor.

It catalyses the reaction L-histidinol phosphate + 2-oxoglutarate = 3-(imidazol-4-yl)-2-oxopropyl phosphate + L-glutamate. It functions in the pathway amino-acid biosynthesis; L-histidine biosynthesis; L-histidine from 5-phospho-alpha-D-ribose 1-diphosphate: step 7/9. The polypeptide is Histidinol-phosphate aminotransferase (Acinetobacter baumannii (strain ATCC 17978 / DSM 105126 / CIP 53.77 / LMG 1025 / NCDC KC755 / 5377)).